A 360-amino-acid polypeptide reads, in one-letter code: Peptide chain release factor 1 (360 aa).

Gln-235 carries the post-translational modification N5-methylglutamine. A disordered region spans residues 286-313 (RQQAEASTRRNLLGSGDRSDRNRTYNFP).

Belongs to the prokaryotic/mitochondrial release factor family. Methylated by PrmC. Methylation increases the termination efficiency of RF1.

It localises to the cytoplasm. Its function is as follows. Peptide chain release factor 1 directs the termination of translation in response to the peptide chain termination codons UAG and UAA. This is Peptide chain release factor 1 from Cronobacter sakazakii (strain ATCC BAA-894) (Enterobacter sakazakii).